We begin with the raw amino-acid sequence, 1906 residues long: DENN domain-containing protein 4C (1906 aa).

Positions 40–199 (KAPITDIAVI…NVFLCYKKSV (160 aa)) constitute an MABP domain. One can recognise a uDENN domain in the interval 191 to 363 (VFLCYKKSVP…NIPFPSPQRP (173 aa)). Residues 384–520 (PLPLSGANFS…PCKSLLGTLR (137 aa)) form the cDENN domain. The dDENN domain maps to 522–640 (LYQQLCSVHR…CSFVSDKDTG (119 aa)). 3 positions are modified to phosphoserine: Ser702, Ser736, and Ser740. One copy of the PPR repeat lies at 818–852 (DEVCYRVVMQLCGLWVNPVLAVRVLFEMKTARIKP). A compositionally biased stretch (polar residues) spans 904–917 (SQVFSISGGQSDQG). 2 disordered regions span residues 904–942 (SQVF…PPEL) and 963–984 (LQPT…SIVK). Residues 920–939 (SKDELVKEGADGHAPEEHTP) show a composition bias toward basic and acidic residues. The residue at position 966 (Thr966) is a Phosphothreonine. Over residues 966–975 (TPEPQSPTEP) the composition is skewed to pro residues. A Phosphoserine modification is found at Ser971. A Phosphothreonine modification is found at Thr973. 6 positions are modified to phosphoserine: Ser987, Ser1000, Ser1043, Ser1058, Ser1096, and Ser1123. Over residues 1154-1171 (NSLQSNSHSDQSRDTQAG) the composition is skewed to polar residues. Residues 1154–1184 (NSLQSNSHSDQSRDTQAGAQDPVNKRSSSYA) are disordered. Residues Ser1181, Ser1221, Ser1240, Ser1248, and Ser1274 each carry the phosphoserine modification. The segment at 1246–1317 (SCSMELHGEG…PQSPYRAYKD (72 aa)) is disordered. Residues 1281 to 1291 (PPARDSTETEK) are compositionally biased toward basic and acidic residues. Positions 1292-1302 (SSPAVSSSKTL) are enriched in polar residues. Ser1321, Ser1333, and Ser1342 each carry phosphoserine. Disordered regions lie at residues 1410–1440 (SPNT…GDVG), 1548–1577 (STSG…SAEP), and 1596–1628 (ASYT…LSKR). Residues 1423–1437 (LTQSNTSLGSSSSSG) are compositionally biased toward low complexity. 2 stretches are compositionally biased toward polar residues: residues 1548–1564 (STSG…SASE) and 1611–1628 (GDVQ…LSKR). 5 positions are modified to phosphoserine: Ser1620, Ser1624, Ser1626, Ser1637, and Ser1796.

In terms of processing, phosphorylated in response to insulin.

The protein resides in the cytoplasmic vesicle membrane. It is found in the cell membrane. The protein localises to the cytoplasm. It localises to the cytosol. Guanine nucleotide exchange factor (GEF) activating RAB10. Promotes the exchange of GDP to GTP, converting inactive GDP-bound RAB10 into its active GTP-bound form. Thereby, stimulates SLC2A4/GLUT4 glucose transporter-enriched vesicles delivery to the plasma membrane in response to insulin. In Mus musculus (Mouse), this protein is DENN domain-containing protein 4C (Dennd4c).